Here is a 998-residue protein sequence, read N- to C-terminus: Probable protein kinase DDB_G0277539 (998 aa).

6 disordered regions span residues 1-34 (MDFPSQSEKKKYITKKRTTLFSYDDDDDDDDFDQ), 65-207 (CEDQ…TNEF), 265-284 (INNNYNNNNNNEEDQIFSSS), 316-367 (SNGS…NYSS), 380-420 (ERTN…PNSI), and 435-489 (RLQS…NNNN). The segment covering 23-32 (YDDDDDDDDF) has biased composition (acidic residues). Low complexity predominate over residues 70–139 (QQQQQQSSSP…NNNNNNNNNN (70 aa)). Positions 140-150 (SHHHHLRKGRR) are enriched in basic residues. Residues 166–177 (ASLSSTKTNMFP) show a composition bias toward polar residues. Composition is skewed to low complexity over residues 184 to 203 (SSPSSQQQQQQQQQQSQSQQ) and 265 to 274 (INNNYNNNNN). Over residues 316 to 328 (SNGSYNKGNTFPS) the composition is skewed to polar residues. Basic and acidic residues predominate over residues 330–340 (EVKRVRPDQRA). Composition is skewed to low complexity over residues 393–415 (NVNNNNNNNANNNNVNNNNNNNN) and 450–489 (NNNNNNNNASNNNNDNNNNNNNNNNNNNNNDDTCNNNNNN). Residues 508 to 849 (FQELDLIGEG…AEQLLEHPLI (342 aa)) form the Protein kinase domain. Residues 514–522 (IGEGSFGHV) and lysine 537 each bind ATP. Aspartate 631 acts as the Proton acceptor in catalysis. 2 residues coordinate Mg(2+): asparagine 636 and glutamate 677.

It belongs to the protein kinase superfamily. Ser/Thr protein kinase family. WEE1 subfamily.

It carries out the reaction L-seryl-[protein] + ATP = O-phospho-L-seryl-[protein] + ADP + H(+). The catalysed reaction is L-threonyl-[protein] + ATP = O-phospho-L-threonyl-[protein] + ADP + H(+). This is Probable protein kinase DDB_G0277539 from Dictyostelium discoideum (Social amoeba).